Consider the following 274-residue polypeptide: Large ribosomal subunit protein uL2 (274 aa).

The tract at residues valine 195–lysine 274 is disordered. Basic residues-rich tracts occupy residues lysine 207 to asparagine 220 and proline 244 to serine 264.

This sequence belongs to the universal ribosomal protein uL2 family. In terms of assembly, part of the 50S ribosomal subunit. Forms a bridge to the 30S subunit in the 70S ribosome.

Its function is as follows. One of the primary rRNA binding proteins. Required for association of the 30S and 50S subunits to form the 70S ribosome, for tRNA binding and peptide bond formation. It has been suggested to have peptidyltransferase activity; this is somewhat controversial. Makes several contacts with the 16S rRNA in the 70S ribosome. The protein is Large ribosomal subunit protein uL2 of Bacteroides thetaiotaomicron (strain ATCC 29148 / DSM 2079 / JCM 5827 / CCUG 10774 / NCTC 10582 / VPI-5482 / E50).